We begin with the raw amino-acid sequence, 260 residues long: Pyridoxine 5'-phosphate synthase (260 aa).

Positions 7 and 18 each coordinate 3-amino-2-oxopropyl phosphate. Histidine 43 serves as the catalytic Proton acceptor. 1-deoxy-D-xylulose 5-phosphate is bound by residues arginine 45 and histidine 50. Residue glutamate 83 is the Proton acceptor of the active site. Threonine 113 contacts 1-deoxy-D-xylulose 5-phosphate. The active-site Proton donor is the histidine 208. Residues aspartate 209 and 230–231 (GH) contribute to the 3-amino-2-oxopropyl phosphate site.

The protein belongs to the PNP synthase family. Homooctamer; tetramer of dimers.

It localises to the cytoplasm. The enzyme catalyses 3-amino-2-oxopropyl phosphate + 1-deoxy-D-xylulose 5-phosphate = pyridoxine 5'-phosphate + phosphate + 2 H2O + H(+). It functions in the pathway cofactor biosynthesis; pyridoxine 5'-phosphate biosynthesis; pyridoxine 5'-phosphate from D-erythrose 4-phosphate: step 5/5. Catalyzes the complicated ring closure reaction between the two acyclic compounds 1-deoxy-D-xylulose-5-phosphate (DXP) and 3-amino-2-oxopropyl phosphate (1-amino-acetone-3-phosphate or AAP) to form pyridoxine 5'-phosphate (PNP) and inorganic phosphate. The sequence is that of Pyridoxine 5'-phosphate synthase from Leptospira biflexa serovar Patoc (strain Patoc 1 / Ames).